A 122-amino-acid polypeptide reads, in one-letter code: Holo-[acyl-carrier-protein] synthase (122 aa).

Mg(2+)-binding residues include aspartate 8 and glutamate 56.

The protein belongs to the P-Pant transferase superfamily. AcpS family. Mg(2+) serves as cofactor.

The protein resides in the cytoplasm. It carries out the reaction apo-[ACP] + CoA = holo-[ACP] + adenosine 3',5'-bisphosphate + H(+). Transfers the 4'-phosphopantetheine moiety from coenzyme A to a Ser of acyl-carrier-protein. The protein is Holo-[acyl-carrier-protein] synthase of Alkaliphilus metalliredigens (strain QYMF).